Consider the following 440-residue polypeptide: Xylose isomerase (440 aa).

Active-site residues include H100 and D103. Mg(2+) contacts are provided by E231, E267, H270, D295, D306, D308, and D338.

This sequence belongs to the xylose isomerase family. As to quaternary structure, homotetramer. It depends on Mg(2+) as a cofactor.

It is found in the cytoplasm. The catalysed reaction is alpha-D-xylose = alpha-D-xylulofuranose. The sequence is that of Xylose isomerase from Paraburkholderia phytofirmans (strain DSM 17436 / LMG 22146 / PsJN) (Burkholderia phytofirmans).